Here is a 183-residue protein sequence, read N- to C-terminus: uncharacterized protein (183 aa).

Positions 1–17 (MVLFILVLYTCIQDGNG) are cleaved as a signal peptide.

This is an uncharacterized protein from Saccharomyces cerevisiae (strain ATCC 204508 / S288c) (Baker's yeast).